The chain runs to 517 residues: Argininosuccinate lyase, chloroplastic (517 aa).

The transit peptide at 1-45 (MGAIDLSFSQSLLFSSSRSNLSSSTHRSVSFLPPGSKSRCLPPLR) directs the protein to the chloroplast. 3 residues coordinate 2-(N(omega)-L-arginino)succinate: Ser79, Asn166, and Thr211. Catalysis depends on His212, which acts as the Proton acceptor. The active-site Proton donor is Ser333. Residues Asn341, Tyr373, Gln378, and Lys381 each coordinate 2-(N(omega)-L-arginino)succinate.

Belongs to the lyase 1 family. Argininosuccinate lyase subfamily.

Its subcellular location is the plastid. It localises to the chloroplast. It carries out the reaction 2-(N(omega)-L-arginino)succinate = fumarate + L-arginine. The protein operates within amino-acid biosynthesis; L-arginine biosynthesis; L-arginine from L-ornithine and carbamoyl phosphate: step 3/3. This Arabidopsis thaliana (Mouse-ear cress) protein is Argininosuccinate lyase, chloroplastic.